Here is a 158-residue protein sequence, read N- to C-terminus: HTH-type transcriptional repressor NicR (158 aa).

An HTH marR-type domain is found at 20–152 (TEQVGHLLRK…ILYLLRKMID (133 aa)). The H-T-H motif DNA-binding region spans 66–89 (QAELIKATAVDQATIRGIVERLKA).

The protein operates within cofactor degradation; nicotinate degradation [regulation]. Its function is as follows. Transcriptional repressor for the nicCDEFTP and nicXR operons, encoding the lower aerobic nicotinate degradation pathway. Acts under non-induced conditions: repression of the nicCDEFTP and nicXR operons becomes alleviated in presence of 6-hydroxynicotinate (6HNA). This chain is HTH-type transcriptional repressor NicR (nicR), found in Pseudomonas putida (strain ATCC 47054 / DSM 6125 / CFBP 8728 / NCIMB 11950 / KT2440).